The following is a 406-amino-acid chain: Putative ankyrin repeat protein RF_0266 (406 aa).

ANK repeat units lie at residues 68–98 (TSHS…DINN), 103–129 (NYIT…QDDI), 130–161 (KVQN…IIKP), 163–189 (HIEL…DIEK), and 203–232 (SIDC…KPEQ).

The polypeptide is Putative ankyrin repeat protein RF_0266 (Rickettsia felis (strain ATCC VR-1525 / URRWXCal2) (Rickettsia azadi)).